The chain runs to 892 residues: Translation initiation factor IF-2 (892 aa).

The tract at residues 88-306 is disordered; sequence KKRTFVKRDP…LQQGFQKPAQ (219 aa). 2 stretches are compositionally biased toward basic and acidic residues: residues 93 to 159 and 166 to 216; these read VKRD…KDKV and DMIK…EENK. The segment covering 254–269 has biased composition (basic residues); sequence GRGRNAKAARPAKKGK. Basic and acidic residues predominate over residues 270 to 282; that stretch reads HAESKADREEARA. The 170-residue stretch at 391 to 560 folds into the tr-type G domain; the sequence is PRAPVVTIMG…LLQAEVLELK (170 aa). The G1 stretch occupies residues 400–407; sequence GHVDHGKT. 400 to 407 contacts GTP; the sequence is GHVDHGKT. Positions 425 to 429 are G2; that stretch reads GITQH. The interval 446–449 is G3; the sequence is DTPG. Residues 446–450 and 500–503 each bind GTP; these read DTPGH and NKID. The tract at residues 500-503 is G4; it reads NKID. Residues 536–538 form a G5 region; the sequence is SAK.

This sequence belongs to the TRAFAC class translation factor GTPase superfamily. Classic translation factor GTPase family. IF-2 subfamily.

It localises to the cytoplasm. One of the essential components for the initiation of protein synthesis. Protects formylmethionyl-tRNA from spontaneous hydrolysis and promotes its binding to the 30S ribosomal subunits. Also involved in the hydrolysis of GTP during the formation of the 70S ribosomal complex. The sequence is that of Translation initiation factor IF-2 from Salmonella schwarzengrund (strain CVM19633).